Consider the following 157-residue polypeptide: Anaerobic nitrite reductase Hb1 (157 aa).

One can recognise a Globin domain in the interval 5–154 (GFTEEQEALV…LAEAIKSEMK (150 aa)). The Homodimerization motif lies at 38-42 (EIAPA). Residues Ser48, Lys62, His66, Arg96, Thr100, and His101 each contribute to the heme b site. Residues 108–120 (AEHFEVTKLALLE) carry the Homodimerization motif.

Belongs to the plant globin family. In terms of assembly, homodimer. Heme b is required as a cofactor. In terms of tissue distribution, predominantly expressed in leaves, to a lower extent in roots, and barely in stems, flowers and seeds.

The protein resides in the cytoplasm. It localises to the nucleus. The catalysed reaction is Fe(III)-heme b-[protein] + nitric oxide + H2O = Fe(II)-heme b-[protein] + nitrite + 2 H(+). Its function is as follows. Phytoglobin that reduces nitrite to nitric oxide (NO) under anoxic conditions (e.g. during flooding or in waterlogged soil) and upon root nodulation. Required for general plant development and during nodulation, especially for the onset of symbiosis. Monitors nitric oxide (NO) levels during early phase of the nitrogen-fixing symbiosis and buffers oxygen in functioning nodules. May not function as an oxygen storage or transport protein. Has an unusually high affinity for O(2) through a hexacoordinate heme iron because of a very low dissociation constant. Involved in water stress tolerance. The protein is Anaerobic nitrite reductase Hb1 of Glycine max (Soybean).